Here is a 90-residue protein sequence, read N- to C-terminus: Putative antitoxin VapB8 (90 aa).

A disordered region spans residues 1-56 (MEKSRCHAVAHGGGCAGSAKSHKSGGRCGQGRGAGDSHGTRGAGRRYRAASAPHPL). Over residues 26–36 (GRCGQGRGAGD) the composition is skewed to gly residues.

Antitoxin component of a possible type II toxin-antitoxin (TA) system. The cognate toxin is VapC8. This chain is Putative antitoxin VapB8 (vapB8), found in Mycobacterium tuberculosis (strain ATCC 25618 / H37Rv).